Reading from the N-terminus, the 219-residue chain is Mucosal pentraxin (219 aa).

The first 19 residues, 1-19, serve as a signal peptide directing secretion; that stretch reads MEKLIVGTLLLTVLSGGIS. Residues 24-219 form the Pentraxin (PTX) domain; it reads DGKAFIFPQE…YVVTKPKLWT (196 aa). A disulfide bridge connects residues Cys55 and Cys114. Ca(2+) is bound by residues Asp77, Asn78, Glu155, Gln156, Asp157, and Gln167.

The protein belongs to the pentraxin family. In terms of assembly, homopentamer. Pentraxin (or pentaxin) have a discoid arrangement of 5 non-covalently bound subunits. Ca(2+) serves as cofactor. In terms of tissue distribution, expression is restricted to small intestine, stomach and colon. Within colon, expressed in epithelial cells located within the lower to mid region of transverse and distal crypts, but not in proximal colon.

It is found in the secreted. This Rattus norvegicus (Rat) protein is Mucosal pentraxin (Mptx1).